Here is a 458-residue protein sequence, read N- to C-terminus: Argininosuccinate lyase (458 aa).

Belongs to the lyase 1 family. Argininosuccinate lyase subfamily.

The protein resides in the cytoplasm. The catalysed reaction is 2-(N(omega)-L-arginino)succinate = fumarate + L-arginine. It participates in amino-acid biosynthesis; L-arginine biosynthesis; L-arginine from L-ornithine and carbamoyl phosphate: step 3/3. The protein is Argininosuccinate lyase of Heliobacterium mobile (Heliobacillus mobilis).